Reading from the N-terminus, the 344-residue chain is MAAREGRAPLVRRAAIYGGVGLAAVAGVAMWSGAGSHRGTGAAGDAPEAAAVGGVAVAASQAAVPASAGVPPSLAGSSAPRLPLDAGGHLAKSRTVRDFFDYCLTARSDLSAAALDAFVVREIAAQLDGTVAQAEALDVWHRYRAYLDALATLRDAGAVDKSDPGALQLALDQRASIAYRTLGDWSQPFFGAEQWRQRYDLARLKITQDRSLTDAQKAERLAALEQQMPADEREAQQRVDRQRAAIDQIAQLRKSGATPDAMRAQLTQTLGPEAAARVAQMQQDDASWQSRYADYAAQRTQIESAGLSPQDRDAQIAALRQRVFTKPGEAVRAASLDRGAGSAH.

The chain crosses the membrane as a helical span at residues 14–34 (AAIYGGVGLAAVAGVAMWSGA).

The protein belongs to the lipase chaperone family.

The protein resides in the cell inner membrane. Functionally, may be involved in the folding of the extracellular lipase during its passage through the periplasm. The polypeptide is Lipase chaperone (Burkholderia cenocepacia (strain ATCC BAA-245 / DSM 16553 / LMG 16656 / NCTC 13227 / J2315 / CF5610) (Burkholderia cepacia (strain J2315))).